The following is a 554-amino-acid chain: uncharacterized protein (554 aa).

Helical transmembrane passes span 13-31 (SVAH…GVYL), 36-58 (IFGV…HFGF), 73-92 (LILF…FSSF), 99-121 (LNLL…YYLW), and 161-183 (IALG…IIAI). RCK C-terminal domains lie at 199 to 281 (KTQS…FIGK) and 282 to 366 (EVEL…VLGN). 4 helical membrane-spanning segments follow: residues 376 to 395 (IVTI…LPIA), 405 to 422 (LGLA…GRFG), 442 to 464 (IGIV…QTVV), and 468 to 490 (GLLY…GAIA).

Belongs to the AAE transporter (TC 2.A.81) family.

The protein localises to the cell membrane. This is an uncharacterized protein from Bacteroides thetaiotaomicron (strain ATCC 29148 / DSM 2079 / JCM 5827 / CCUG 10774 / NCTC 10582 / VPI-5482 / E50).